A 60-amino-acid polypeptide reads, in one-letter code: Large ribosomal subunit protein bL32 (60 aa).

A compositionally biased stretch (basic residues) spans 1–20; the sequence is MAVQKSRKSRSRRDMRRSHH. Residues 1–22 are disordered; it reads MAVQKSRKSRSRRDMRRSHHRM.

This sequence belongs to the bacterial ribosomal protein bL32 family.

The protein is Large ribosomal subunit protein bL32 of Psychrobacter arcticus (strain DSM 17307 / VKM B-2377 / 273-4).